A 368-amino-acid polypeptide reads, in one-letter code: Nuclease EXOG, mitochondrial (368 aa).

Residues 1-41 constitute a mitochondrion transit peptide; the sequence is MAIKSIASRLRGSRRFLSGFVAGAVVGAAGAGLAALQFFRS. The Proton acceptor role is filled by His140. Asn171 contributes to the a divalent metal cation binding site.

This sequence belongs to the DNA/RNA non-specific endonuclease family. As to quaternary structure, homodimer. A divalent metal cation serves as cofactor. As to expression, ubiquitous.

The protein localises to the mitochondrion inner membrane. Endo/exonuclease with nicking activity towards supercoiled DNA, a preference for single-stranded DNA and 5'-3' exonuclease activity. This Homo sapiens (Human) protein is Nuclease EXOG, mitochondrial (EXOG).